A 606-amino-acid polypeptide reads, in one-letter code: Melanoma-associated antigen D2 (606 aa).

Residues 1-204 (MSDTSESGAG…QASGTTGGRR (204 aa)) are disordered. Ser-2 carries the post-translational modification N-acetylserine. Ser-5 is subject to Phosphoserine. A compositionally biased stretch (polar residues) spans 24-37 (SSMMQTLLTVTQNV). At Thr-72 the chain carries Phosphothreonine. Residues 81–93 (TQASSTTQLTDTQ) show a composition bias toward polar residues. Positions 122–131 (ETKKVSHVAD) are enriched in basic and acidic residues. Over residues 142 to 164 (EAAPSQAPADEPEPESAAAQSQE) the composition is skewed to low complexity. Ser-157 is modified (phosphoserine). A compositionally biased stretch (basic residues) spans 171–181 (KVKAKKARKVK). Phosphoserine is present on residues Ser-190, Ser-191, Ser-194, Ser-197, Ser-244, and Ser-247. The span at 248–260 (PKARRGKARRRAA) shows a compositional bias: basic residues. The disordered stretch occupies residues 248-275 (PKARRGKARRRAAKLQSSQEPEAPPPRD). Residues Ser-264 and Ser-265 each carry the phosphoserine modification. The MAGE domain maps to 279–478 (LQGRANDLVK…KEWAAQYREA (200 aa)). Residues 534–563 (GAEAKAKAQESGSASTGASTSTNNSASASA) are disordered.

Interacts with GNAS. May interact with DNAJB1. As to expression, widely expressed. In the developing and adult kidney, expressed in the thick ascending limb of the loop of Henle and the distal convoluted tubules outside the loop.

Regulates the expression, localization to the plasma membrane and function of the sodium chloride cotransporters SLC12A1 and SLC12A3, two key components of salt reabsorption in the distal renal tubule. This Homo sapiens (Human) protein is Melanoma-associated antigen D2 (MAGED2).